The sequence spans 522 residues: ATP synthase subunit alpha, mitochondrial (522 aa).

ATP is bound at residue 172–179 (GDRQTGKT).

This sequence belongs to the ATPase alpha/beta chains family. As to quaternary structure, F-type ATPases have 2 components, CF(1) - the catalytic core - and CF(0) - the membrane proton channel. CF(1) has five subunits: alpha(3), beta(3), gamma(1), delta(1), epsilon(1). CF(0) has three main subunits: a, b and c.

It is found in the mitochondrion. The protein localises to the mitochondrion inner membrane. Functionally, mitochondrial membrane ATP synthase (F(1)F(0) ATP synthase or Complex V) produces ATP from ADP in the presence of a proton gradient across the membrane which is generated by electron transport complexes of the respiratory chain. F-type ATPases consist of two structural domains, F(1) - containing the extramembraneous catalytic core, and F(0) - containing the membrane proton channel, linked together by a central stalk and a peripheral stalk. During catalysis, ATP synthesis in the catalytic domain of F(1) is coupled via a rotary mechanism of the central stalk subunits to proton translocation. Subunits alpha and beta form the catalytic core in F(1). Rotation of the central stalk against the surrounding alpha(3)beta(3) subunits leads to hydrolysis of ATP in three separate catalytic sites on the beta subunits. Subunit alpha does not bear the catalytic high-affinity ATP-binding sites. The sequence is that of ATP synthase subunit alpha, mitochondrial (ATP1) from Acanthamoeba castellanii (Amoeba).